We begin with the raw amino-acid sequence, 1174 residues long: MGVGLHLTVPGLRRDGRGVQSNSHDTSSKTTADISRCPQHTDAGLQRAATPGISRLLGISSRSVTLTKPRSATRGNSRYHWVPAAAGWTVGVIATLSLLASVSPLIRWIIKVPREFINDYLFNFPDTNFAWSFVLALLAAALTARKRIAWLVLLANMVLAAVVNAAEIAAGGNTAAESFGENLGFAVHVVAIVVLVLGYREFWAKVRRGALFRAAAVWLAGAVVGIVASWGLVELFPGSLAPDERLGYAANRVVGFALADPDLFTGRPHVFLNAIFGLFGAFALIGAAIVLFLSQRADNALTGEDESAIRGLLDLYGKDDSLGYFATRRDKSVVFASSGRACITYRVEVGVCLASGDPVGDHRAWPQAVDAWLRLCQTYGWAPGVMGASSQGAQTYREAGLTALELGDEAILRPADFKLSGPEMRGVRQAVTRARRAGLTVRIRRHRDIAEDEMAQTITRADSWRDTETERGFSMALGRLGDPADSDCLLVEAIDPHNQVLAMLSLVPWGTTGVSLDLMRRSPQSPNGTIELMVSELALHAESLGITRISLNFAVFRAAFEQGAQLGAGPVARLWRGLLVFFSRWWQLETLYRSNMKYQPEWVPRYACYEDARVIPRVGVASVIAEGFLVLPFSRRNRVHTGHHPAVPERLAATGLLHHDGSAPDVSGLRQVGLTNGDGVERRLPEQVRVRFDKLEKLRSSGIDAFPVGRPPSHTVAQALAADHQASVSVSGRIMRIRNYGGVLFAQLRDWSGEMQVLLDNSRLDQGCAADFNAATDLGDLVEMTGHMGASKTGTPSLIVSGWRLIGKCLRPLPNKWKGLLDPEARVRTRYLDLAVNAESRALITARSSVLRAVRETLFAKGFVEVETPILQQLHGGATARPFVTHINTYSMDLFLRIAPELYLKRLCVGGVERVFELGRAFRNEGVDFSHNPEFTLLEAYQAHADYLEWIDGCRELIQNAAQAANGAPIAMRPRTDKGSDGTRHHLEPVDISGIWPVRTVHDAISEALGERIDADTGLTTLRKLCDAAGVPYRTQWDAGAVVLELYEHLVECRTEQPTFYIDFPTSVSPLTRPHRSKRGVAERWDLVAWGIELGTAYSELTDPVEQRRRLQEQSLLAAGGDPEAMELDEDFLQAMEYAMPPTGGLGMGIDRVVMLITGRSIRETLPFPLAKPH.

The segment at 1-665 (MGVGLHLTVP…LLHHDGSAPD (665 aa)) is phosphatidylglycerol lysyltransferase. The interval 9 to 36 (VPGLRRDGRGVQSNSHDTSSKTTADISR) is disordered. Over residues 19-33 (VQSNSHDTSSKTTAD) the composition is skewed to polar residues. 7 consecutive transmembrane segments (helical) span residues 82 to 102 (VPAA…LASV), 124 to 144 (FPDT…ALTA), 148 to 168 (IAWL…AAEI), 179 to 199 (FGEN…VLGY), 216 to 236 (AVWL…VELF), 274 to 294 (AIFG…LFLS), and 614 to 634 (VIPR…LPFS). Positions 666–1174 (VSGLRQVGLT…TLPFPLAKPH (509 aa)) are lysine--tRNA ligase. Positions 728–806 (VSVSGRIMRI…SLIVSGWRLI (79 aa)) form a DNA-binding region, OB. Positions 1086 and 1093 each coordinate Mg(2+).

This sequence in the N-terminal section; belongs to the LPG synthetase family. The protein in the C-terminal section; belongs to the class-II aminoacyl-tRNA synthetase family. Mg(2+) is required as a cofactor.

Its subcellular location is the cell membrane. It catalyses the reaction tRNA(Lys) + L-lysine + ATP = L-lysyl-tRNA(Lys) + AMP + diphosphate. It carries out the reaction L-lysyl-tRNA(Lys) + a 1,2-diacyl-sn-glycero-3-phospho-(1'-sn-glycerol) = a 1,2-diacyl-sn-glycero-3-phospho-1'-(3'-O-L-lysyl)-sn-glycerol + tRNA(Lys). Functionally, catalyzes the production of L-lysyl-tRNA(Lys)transfer and the transfer of a lysyl group from L-lysyl-tRNA(Lys) to membrane-bound phosphatidylglycerol (PG), which produces lysylphosphatidylglycerol (LPG), one of the components of the bacterial membrane with a positive net charge. LPG synthesis contributes to the resistance to cationic antimicrobial peptides (CAMPs) and likely protects M.tuberculosis against the CAMPs produced by competiting microorganisms (bacteriocins). In fact, the modification of anionic phosphatidylglycerol with positively charged L-lysine results in repulsion of the peptides. The polypeptide is Lysylphosphatidylglycerol biosynthesis bifunctional protein LysX (lysX) (Mycobacterium tuberculosis (strain KZN 1435 / MDR)).